Consider the following 288-residue polypeptide: Bifunctional protein FolD (288 aa).

NADP(+)-binding positions include 166–168 (GAS) and I232.

It belongs to the tetrahydrofolate dehydrogenase/cyclohydrolase family. In terms of assembly, homodimer.

The enzyme catalyses (6R)-5,10-methylene-5,6,7,8-tetrahydrofolate + NADP(+) = (6R)-5,10-methenyltetrahydrofolate + NADPH. It carries out the reaction (6R)-5,10-methenyltetrahydrofolate + H2O = (6R)-10-formyltetrahydrofolate + H(+). Its pathway is one-carbon metabolism; tetrahydrofolate interconversion. Catalyzes the oxidation of 5,10-methylenetetrahydrofolate to 5,10-methenyltetrahydrofolate and then the hydrolysis of 5,10-methenyltetrahydrofolate to 10-formyltetrahydrofolate. This chain is Bifunctional protein FolD, found in Escherichia coli (strain SMS-3-5 / SECEC).